We begin with the raw amino-acid sequence, 187 residues long: MSKSASRARLADIIRARSFGRGEITLASGRKSDFYFNLKPTMLDPEGAALLAELTFEALREDNVDYIGGLEMGAVPLAGAIAQLSWLKNHPIAAFFVRKKPKEHGARLSVEGLSKTETLQGKRVVIVEDVTTTGGSAIKAAESVREAGGVIVLVLTMVDREEGATEAFAAAGLPFRSLYKASEFLKS.

5-phospho-alpha-D-ribose 1-diphosphate-binding positions include Arg98, Lys99, Lys102, His104, and Glu128–Ser136. Orotate-binding residues include Thr132 and Arg160.

This sequence belongs to the purine/pyrimidine phosphoribosyltransferase family. PyrE subfamily. As to quaternary structure, homodimer. Mg(2+) serves as cofactor.

It catalyses the reaction orotidine 5'-phosphate + diphosphate = orotate + 5-phospho-alpha-D-ribose 1-diphosphate. It participates in pyrimidine metabolism; UMP biosynthesis via de novo pathway; UMP from orotate: step 1/2. Catalyzes the transfer of a ribosyl phosphate group from 5-phosphoribose 1-diphosphate to orotate, leading to the formation of orotidine monophosphate (OMP). The chain is Orotate phosphoribosyltransferase from Rhodopseudomonas palustris (strain BisB18).